Reading from the N-terminus, the 156-residue chain is Arginine repressor (156 aa).

It belongs to the ArgR family.

It localises to the cytoplasm. The protein operates within amino-acid biosynthesis; L-arginine biosynthesis [regulation]. In terms of biological role, regulates arginine biosynthesis genes. This is Arginine repressor from Shewanella frigidimarina (strain NCIMB 400).